Here is a 564-residue protein sequence, read N- to C-terminus: Rhodopsin kinase GRK1 (564 aa).

The interval 1-15 (MDFGSLETVVANSAF) is interaction with RCVRN. Residues 1–189 (MDFGSLETVV…LEAQPIGEDW (189 aa)) form an N-terminal region. Ser5 carries the post-translational modification Phosphoserine. Thr8 bears the Phosphothreonine mark. Ser21 bears the Phosphoserine; by PKA and autocatalysis mark. The 118-residue stretch at 58–175 (FDNLCSEQPI…LGSLYFLRFL (118 aa)) folds into the RGS domain. The Protein kinase domain occupies 190 to 455 (FLDFRVLGKG…CDALRANVLF (266 aa)). ATP is bound by residues 196-204 (LGKGGFGEV) and Lys219. The Proton acceptor role is filled by Asp317. The region spanning 456–521 (KDISWRQLEA…GNCSIPWQEE (66 aa)) is the AGC-kinase C-terminal domain. The segment at 456 to 564 (KDISWRQLEA…TAKSGMCLIS (109 aa)) is C-terminal. Position 491 is a phosphoserine; by autocatalysis (Ser491). Position 492 is a phosphothreonine; by autocatalysis (Thr492). At Cys561 the chain carries Cysteine methyl ester. Cys561 carries the S-farnesyl cysteine lipid modification. Positions 562 to 564 (LIS) are cleaved as a propeptide — removed in mature form.

This sequence belongs to the protein kinase superfamily. AGC Ser/Thr protein kinase family. GPRK subfamily. In terms of assembly, interacts (via N-terminus) with RCVRN (via C-terminus); the interaction is Ca(2+)-dependent. Interacts (when prenylated) with PDE6D; this promotes release from membranes. May form a complex composed of RHO, GRK1 and RCVRN in a Ca(2+)-dependent manner; RCVRN prevents the interaction between GRK1 and RHO. Post-translationally, autophosphorylated, Ser-21 is a minor site of autophosphorylation compared to Ser-491 and Thr-492. Phosphorylation at Ser-21 is regulated by light and activated by cAMP. In terms of processing, farnesylation is required for full activity. Detected in retina (at protein level). Retina-specific. Expressed in rod and cone photoreceptor cells.

It localises to the membrane. The protein localises to the cell projection. Its subcellular location is the cilium. It is found in the photoreceptor outer segment. The catalysed reaction is L-threonyl-[rhodopsin] + ATP = O-phospho-L-threonyl-[rhodopsin] + ADP + H(+). It carries out the reaction L-seryl-[rhodopsin] + ATP = O-phospho-L-seryl-[rhodopsin] + ADP + H(+). With respect to regulation, inhibited by RCVRN, which prevents the interaction between GRK1 and RHO. Inhibition is calcium-dependent. Functionally, retina-specific kinase involved in the signal turnoff via phosphorylation of rhodopsin (RHO), the G protein- coupled receptor that initiates the phototransduction cascade. This rapid desensitization is essential for scotopic vision and permits rapid adaptation to changes in illumination. May play a role in the maintenance of the outer nuclear layer in the retina. This Rattus norvegicus (Rat) protein is Rhodopsin kinase GRK1.